Here is a 366-residue protein sequence, read N- to C-terminus: Mitogen-activated protein kinase sakA (366 aa).

Positions 20–299 (YTDLQPVGMG…AGEALAHEYL (280 aa)) constitute a Protein kinase domain. ATP contacts are provided by residues 26 to 34 (VGMGAFGLV) and Lys-49. The Proton acceptor role is filled by Asp-141. Thr-171 carries the phosphothreonine modification. The short motif at 171–173 (TGY) is the TXY element. The residue at position 173 (Tyr-173) is a Phosphotyrosine.

Belongs to the protein kinase superfamily. Ser/Thr protein kinase family. MAP kinase subfamily. HOG1 sub-subfamily. In terms of assembly, interacts with the AGC kinase ypkA. Interacts with sakA upon osmotic and cell wall stresses. Mg(2+) is required as a cofactor. Dually phosphorylated on Thr-171 and Tyr-173, which activates the enzyme. Environmental stresses such as high temperature, osmotic stress, cold stress or ethanol stress modulate the activation of sakA via phosphorylation.

Its subcellular location is the cytoplasm. The protein resides in the nucleus. It carries out the reaction L-seryl-[protein] + ATP = O-phospho-L-seryl-[protein] + ADP + H(+). The catalysed reaction is L-threonyl-[protein] + ATP = O-phospho-L-threonyl-[protein] + ADP + H(+). With respect to regulation, activated by tyrosine and threonine phosphorylation. Deactivated by protein phosphatase 2C homolog 2 ptcB. Its function is as follows. Proline-directed serine/threonine-protein kinase involved in a signal transduction pathway that is activated by changes in the osmolarity of the extracellular environment. Controls osmotic regulation of transcription of target genes. Involved in environmental stress response. With mpkC, plays a redundant or cooperative role in the conidial stress resistance. Also plays a supportive role in osmotic stress adaptation when sakA is deficient. Involved in paradoxical growth, the cell wall integrity (CWI) pathway and biofilm formation. Also collaborates with mpkC to allow ful virulence in a neutropenic murine model ofinvasive pulmonary aspergillosis. MpkC and sakA have both independent and collaborative functions during the transcriptional response to transient osmotic stress and sakA not only seems to modulate pathways involved in nucleotide, fatty acid, nitrogen and organic acid biosynthesis but is also important for the activation of genes involved in mitochondrial and endoplasmic reticulum functions. In Aspergillus fumigatus (strain ATCC MYA-4609 / CBS 101355 / FGSC A1100 / Af293) (Neosartorya fumigata), this protein is Mitogen-activated protein kinase sakA.